The chain runs to 150 residues: Ribonuclease pancreatic delta-type (150 aa).

Residues 1–25 (MGLEKSFILFSLLVLVLGWVQPSLG) form the signal peptide. Position 35 (Arg-35) interacts with substrate. The Proton acceptor role is filled by His-37. 4 disulfide bridges follow: Cys-51/Cys-110, Cys-65/Cys-121, Cys-83/Cys-136, and Cys-90/Cys-98. Residues 66–70 (KPVNT) and Lys-91 contribute to the substrate site. The Proton donor role is filled by His-145.

It belongs to the pancreatic ribonuclease family. As to quaternary structure, monomer.

It localises to the secreted. It catalyses the reaction an [RNA] containing cytidine + H2O = an [RNA]-3'-cytidine-3'-phosphate + a 5'-hydroxy-ribonucleotide-3'-[RNA].. The enzyme catalyses an [RNA] containing uridine + H2O = an [RNA]-3'-uridine-3'-phosphate + a 5'-hydroxy-ribonucleotide-3'-[RNA].. Functionally, endonuclease that catalyzes the cleavage of RNA on the 3' side of pyrimidine nucleotides. Acts on single-stranded and double-stranded RNA. The sequence is that of Ribonuclease pancreatic delta-type from Rattus tiomanicus (Malayan field rat).